The following is a 425-amino-acid chain: Serine--tRNA ligase (425 aa).

230 to 232 (TAE) serves as a coordination point for L-serine. 261–263 (RSE) contributes to the ATP binding site. Position 284 (Glu284) interacts with L-serine. ATP is bound at residue 348–351 (EISS). Position 384 (Ser384) interacts with L-serine.

It belongs to the class-II aminoacyl-tRNA synthetase family. Type-1 seryl-tRNA synthetase subfamily. In terms of assembly, homodimer. The tRNA molecule binds across the dimer.

The protein resides in the cytoplasm. It catalyses the reaction tRNA(Ser) + L-serine + ATP = L-seryl-tRNA(Ser) + AMP + diphosphate + H(+). The enzyme catalyses tRNA(Sec) + L-serine + ATP = L-seryl-tRNA(Sec) + AMP + diphosphate + H(+). The protein operates within aminoacyl-tRNA biosynthesis; selenocysteinyl-tRNA(Sec) biosynthesis; L-seryl-tRNA(Sec) from L-serine and tRNA(Sec): step 1/1. In terms of biological role, catalyzes the attachment of serine to tRNA(Ser). Is also able to aminoacylate tRNA(Sec) with serine, to form the misacylated tRNA L-seryl-tRNA(Sec), which will be further converted into selenocysteinyl-tRNA(Sec). In Maridesulfovibrio salexigens (strain ATCC 14822 / DSM 2638 / NCIMB 8403 / VKM B-1763) (Desulfovibrio salexigens), this protein is Serine--tRNA ligase.